The sequence spans 363 residues: NAD(P)H-quinone oxidoreductase subunit 1, chloroplastic (363 aa).

Transmembrane regions (helical) follow at residues 30 to 50, 104 to 124, 127 to 147, 253 to 273, 300 to 320, and 343 to 363; these read LVPI…IVWL, IAVI…HLVL, LGIG…GLLM, FGLF…FVTV, VFGT…FLFI, and FLLP…LLSL.

This sequence belongs to the complex I subunit 1 family. In terms of assembly, NDH is composed of at least 16 different subunits, 5 of which are encoded in the nucleus.

The protein localises to the plastid. The protein resides in the chloroplast thylakoid membrane. It carries out the reaction a plastoquinone + NADH + (n+1) H(+)(in) = a plastoquinol + NAD(+) + n H(+)(out). The catalysed reaction is a plastoquinone + NADPH + (n+1) H(+)(in) = a plastoquinol + NADP(+) + n H(+)(out). Its function is as follows. NDH shuttles electrons from NAD(P)H:plastoquinone, via FMN and iron-sulfur (Fe-S) centers, to quinones in the photosynthetic chain and possibly in a chloroplast respiratory chain. The immediate electron acceptor for the enzyme in this species is believed to be plastoquinone. Couples the redox reaction to proton translocation, and thus conserves the redox energy in a proton gradient. In Piper cenocladum (Ant piper), this protein is NAD(P)H-quinone oxidoreductase subunit 1, chloroplastic.